Reading from the N-terminus, the 157-residue chain is Crossover junction endodeoxyribonuclease RuvC (157 aa).

Residues Asp7, Glu66, and Asp139 contribute to the active site. The Mg(2+) site is built by Asp7, Glu66, and Asp139.

The protein belongs to the RuvC family. Homodimer which binds Holliday junction (HJ) DNA. The HJ becomes 2-fold symmetrical on binding to RuvC with unstacked arms; it has a different conformation from HJ DNA in complex with RuvA. In the full resolvosome a probable DNA-RuvA(4)-RuvB(12)-RuvC(2) complex forms which resolves the HJ. It depends on Mg(2+) as a cofactor.

Its subcellular location is the cytoplasm. It catalyses the reaction Endonucleolytic cleavage at a junction such as a reciprocal single-stranded crossover between two homologous DNA duplexes (Holliday junction).. Its function is as follows. The RuvA-RuvB-RuvC complex processes Holliday junction (HJ) DNA during genetic recombination and DNA repair. Endonuclease that resolves HJ intermediates. Cleaves cruciform DNA by making single-stranded nicks across the HJ at symmetrical positions within the homologous arms, yielding a 5'-phosphate and a 3'-hydroxyl group; requires a central core of homology in the junction. The consensus cleavage sequence is 5'-(A/T)TT(C/G)-3'. Cleavage occurs on the 3'-side of the TT dinucleotide at the point of strand exchange. HJ branch migration catalyzed by RuvA-RuvB allows RuvC to scan DNA until it finds its consensus sequence, where it cleaves and resolves the cruciform DNA. The chain is Crossover junction endodeoxyribonuclease RuvC from Helicobacter acinonychis (strain Sheeba).